Here is a 316-residue protein sequence, read N- to C-terminus: Malate dehydrogenase (316 aa).

Residues 12–17 (GAGNIG) and Asp36 contribute to the NAD(+) site. Positions 85 and 91 each coordinate substrate. NAD(+)-binding positions include Asn98 and 121–123 (VTN). Substrate contacts are provided by Asn123 and Arg154. Residue His178 is the Proton acceptor of the active site.

This sequence belongs to the LDH/MDH superfamily. MDH type 3 family.

It catalyses the reaction (S)-malate + NAD(+) = oxaloacetate + NADH + H(+). Catalyzes the reversible oxidation of malate to oxaloacetate. This is Malate dehydrogenase from Wolbachia sp. subsp. Brugia malayi (strain TRS).